Here is a 131-residue protein sequence, read N- to C-terminus: Small ribosomal subunit protein uS8 (131 aa).

It belongs to the universal ribosomal protein uS8 family. Part of the 30S ribosomal subunit. Contacts proteins S5 and S12.

One of the primary rRNA binding proteins, it binds directly to 16S rRNA central domain where it helps coordinate assembly of the platform of the 30S subunit. In Bordetella petrii (strain ATCC BAA-461 / DSM 12804 / CCUG 43448), this protein is Small ribosomal subunit protein uS8.